The sequence spans 321 residues: MLNKLVECENLTFEESYELFNMLLEESEIRIAAYLTALQTKGVTADEIAGFAKAMRDNAVKIDLGEVTDTCGTGGDGSKTINVSTAVSIILACFTKVAKHGNVSVTSKSGSANVYEALGCKILENPDEAKVSIEKTNFAFLFAPKYHPALKKIMPVRSELKIKTVFNILGPLANPANPKYQILGVNSPELSEKVANALSKVGGVKKALVINGNGLDELNPNGASKITEYNGKFETYEITPEDFGLENTKIIPCESPNESARRLIDVFSGKINEDRNFILMNAGAALYASEIVSDFLEGVEIAKNAIDSGKVLKKLEMIKNV.

Residues glycine 72, 75–76, threonine 80, 82–85, 99–107, and serine 111 each bind 5-phospho-alpha-D-ribose 1-diphosphate; these read GD, NVST, and KHGNVSVTS. Residue glycine 72 participates in anthranilate binding. Serine 84 contacts Mg(2+). Asparagine 102 contacts anthranilate. Arginine 157 contacts anthranilate. Aspartate 216 and glutamate 217 together coordinate Mg(2+).

It belongs to the anthranilate phosphoribosyltransferase family. Homodimer. Mg(2+) is required as a cofactor.

The enzyme catalyses N-(5-phospho-beta-D-ribosyl)anthranilate + diphosphate = 5-phospho-alpha-D-ribose 1-diphosphate + anthranilate. Its pathway is amino-acid biosynthesis; L-tryptophan biosynthesis; L-tryptophan from chorismate: step 2/5. In terms of biological role, catalyzes the transfer of the phosphoribosyl group of 5-phosphorylribose-1-pyrophosphate (PRPP) to anthranilate to yield N-(5'-phosphoribosyl)-anthranilate (PRA). This is Anthranilate phosphoribosyltransferase from Methanococcus vannielii (strain ATCC 35089 / DSM 1224 / JCM 13029 / OCM 148 / SB).